An 842-amino-acid polypeptide reads, in one-letter code: Phosphatidylethanolamine N-methyltransferase (842 aa).

The tract at residues 1 to 28 (MIKERKPSKSRAPGKGHKQIPGVAKESQ) is disordered. The Lumenal segment spans residues 1–60 (MIKERKPSKSRAPGKGHKQIPGVAKESQPIARTRTGNVEFTPAKTHDMVRSLFDPTLKKS). Residues 8-18 (SKSRAPGKGHK) are compositionally biased toward basic residues. Residues 61–81 (FLECWISLAILSNVVLCYFMA) traverse the membrane as a helical segment. Topologically, residues 82–91 (TKFGASFTKK) are cytoplasmic. A helical transmembrane segment spans residues 92 to 112 (FFLWQYVFWRLCYNVGIGVVL). The Lumenal segment spans residues 113–172 (HFQSNYETLTNFAKMRSLFSKKNQQWLARFCRFEIESKMPNTYCLEEYPEEFNVWLLFRQ). Residues 173–193 (FVDLILMQDFTTYILFVVLSI) form a helical membrane-spanning segment. At 194–196 (PKT) the chain is on the cytoplasmic side. The helical transmembrane segment at 197 to 217 (VLSSHTVSFALGVIMILFNVW) threads the bilayer. Topologically, residues 218-243 (VKVDAHRVVKDYAWYWGDFFFFQDSK) are lumenal. A helical membrane pass occupies residues 244–264 (LVFDGVFNVSPHPMYSIGYMG). Residues 265–270 (YYGLSL) lie on the Cytoplasmic side of the membrane. Residues 271–291 (ISGDYKVLLVSIGGHLLQFLF) traverse the membrane as a helical segment. Residues 292–345 (LKYCENPHIEKIYGSDAVENDNAHIDELLVKENPNYSKPLITKGLWFTNVDKLR) are Lumenal-facing. Residues 346 to 366 (LTDYFTILTVASIVLFTFFLK) form a helical membrane-spanning segment. Residues 367–370 (PSTK) lie on the Cytoplasmic side of the membrane. The chain crosses the membrane as a helical span at residues 371-391 (ALFWATLVAKITTSLFISLVL). Over 392–414 (HKQSTSKWFTRLFLKNGYTQVHS) the chain is Lumenal. Residues 415–435 (FYQWQFLYNYCLTVSYTLLIL) traverse the membrane as a helical segment. The Cytoplasmic segment spans residues 436–468 (QTWSQFRHLESRNYTQIIFGFLLCWLQKWCDDE). The helical transmembrane segment at 469–489 (ILTAISEFGWFYGDFFLTNYI) threads the bilayer. Topologically, residues 490 to 514 (SSRKLNSRGIYRYLSNPERFLGVAG) are lumenal. Residues 515–535 (CWGAVLITHFSPYNLILAALW) traverse the membrane as a helical segment. The Cytoplasmic portion of the chain corresponds to 536-842 (TAANIALVKL…EIKAVLENLE (307 aa)).

Belongs to the class VI-like SAM-binding methyltransferase superfamily. CHO2 family.

It localises to the endoplasmic reticulum membrane. The catalysed reaction is a 1,2-diacyl-sn-glycero-3-phosphoethanolamine + S-adenosyl-L-methionine = a 1,2-diacyl-sn-glycero-3-phospho-N-methylethanolamine + S-adenosyl-L-homocysteine + H(+). Its pathway is phospholipid metabolism; phosphatidylcholine biosynthesis. In terms of biological role, catalyzes the first step of the methylation pathway of phosphatidylcholine biosynthesis, the SAM-dependent methylation of phosphatidylethanolamine (PE) to phosphatidylmonomethylethanolamine (PMME). This chain is Phosphatidylethanolamine N-methyltransferase (CHO2), found in Lachancea thermotolerans (strain ATCC 56472 / CBS 6340 / NRRL Y-8284) (Yeast).